The primary structure comprises 585 residues: MSLSGVPLSAGLAPSPSNKPTNGKGQNIVRRSGNYKPALWDYDYLQSLPTLYAGEAHVEKLNKLKGEVRIMLEKTVTENPLAQLEQIDTLYRLGISYHFQDEIKALLNTIHNNNNNNNNNDDVYATALEFKLLRLYGYTVHSEVFNVFKDEIDKGFKAISLCGDYVKGMLSLYEASFYSFKGETILDEARDFSTKHLQKYVMMRHNNNSKDQSVDDDDDLVILVEYALELPMHWRMIRLEAKWFIDVYSKRRDDMNPTFLELAQIDFNLLQSTYQEDLKHVSRWWSTCKLGERLPFCRDRLVEVFLLAVALKYEAEFGYARRLLTKIGVLVTLMDDIYDVYGTLDELKLLEDAIERWNINELDQLPEYMNIFFVAMYNVVNGIAYDVLKENEILIVKYLKRAWMDACKSYMVEAKWYYSGYTPSLEEYLENGLISITIPLDLIFLYCLTTSPITEDSMEYLLQYPTILGLSGTLFRLVDDLATSSDELKRGDNPKSIQCYMHESGVCENDSREYIKNLISETWKQMNEVRVAKSPLFSQAFIESAVDFVRGAMLLYQKGDGFGTKHDGDAKDKLVSLFFNPIPTP.

Residues 1–29 (MSLSGVPLSAGLAPSPSNKPTNGKGQNIV) form a disordered region. The transit peptide at 1 to 31 (MSLSGVPLSAGLAPSPSNKPTNGKGQNIVRR) directs the protein to the chloroplast. Positions 15–25 (SPSNKPTNGKG) are enriched in polar residues. Residues Arg298, Asp335, Asp339, Arg476, and Asp479 each contribute to the (2E)-geranyl diphosphate site. Mg(2+) is bound by residues Asp335 and Asp339. The DDXXD motif signature appears at 335–339 (DDIYD). Residues Asp479, Thr483, and Glu487 each coordinate Mg(2+).

This sequence belongs to the terpene synthase family. Tpsb subfamily. The cofactor is Mg(2+). Mn(2+) serves as cofactor. In terms of tissue distribution, expressed in trichomes. Detected in flowers, but not in leaves.

Its subcellular location is the plastid. The protein resides in the chloroplast. In Humulus lupulus (European hop), this protein is Probable monoterpene synthase MTS1, chloroplastic.